Reading from the N-terminus, the 365-residue chain is uncharacterized protein (365 aa).

Belongs to the NAD(P)-dependent epimerase/dehydratase family.

The protein localises to the cytoplasm. It localises to the nucleus. This is an uncharacterized protein from Schizosaccharomyces pombe (strain 972 / ATCC 24843) (Fission yeast).